A 518-amino-acid chain; its full sequence is Probable inorganic carbon transporter subunit DabB (518 aa).

A run of 13 helical transmembrane segments spans residues 3-23 (MQWV…LGSL), 37-57 (ISLL…FEWV), 65-85 (WVGV…IAFV), 114-134 (CVVT…WIAI), 165-185 (AEAC…TWFI), 207-227 (MLLA…GWLI), 242-262 (AGII…IVLS), 264-284 (MAQW…ALVM), 302-322 (MGLM…LHLV), 358-378 (WWFA…LADL), 379-399 (SGPY…IAER), 403-423 (LTSS…VVYT), and 442-462 (WKGD…YFLL).

The protein belongs to the inorganic carbon transporter (TC 9.A.2) DabB family. As to quaternary structure, forms a complex with DabA.

It is found in the cell inner membrane. Intracellular DIC accumulation is sensitive to CCCP (carbonyl cyanide-m-chlorophenylhydrazone) and DCCD (N,N-dicyclohexylcarbodiimide) and therefore likely driven by either proton gradient, ATP, or both. In terms of biological role, part of an energy-coupled inorganic carbon pump involved in transport of dissolved inorganic carbon (DIC) with downstream gene dabA (Tcr_0854); has been suggested to be a proton-DIC symporter. In Hydrogenovibrio crunogenus (strain DSM 25203 / XCL-2) (Thiomicrospira crunogena), this protein is Probable inorganic carbon transporter subunit DabB.